The sequence spans 149 residues: Large ribosomal subunit protein uL15 (149 aa).

A disordered region spans residues 14–57 (KQRKRVGRGSGSGWGCTSGKGNKGQNARSGGGVRPGFEGGQMPL). Gly residues-rich tracts occupy residues 21 to 35 (RGSG…GKGN) and 42 to 52 (SGGGVRPGFEG).

The protein belongs to the universal ribosomal protein uL15 family. Part of the 50S ribosomal subunit.

Its function is as follows. Binds to the 23S rRNA. The protein is Large ribosomal subunit protein uL15 of Oleidesulfovibrio alaskensis (strain ATCC BAA-1058 / DSM 17464 / G20) (Desulfovibrio alaskensis).